The sequence spans 108 residues: MFKGGMGNMMRQAQQMQENMQKAQEEIANMEVEGQAGAGLVKILMTGRHDVKRVSIDDSLFGDDKEMLEDLIAAAVNDAVRNIEVTQKEKMAAATAGMSLPPGFKMPF.

The segment at 1 to 22 (MFKGGMGNMMRQAQQMQENMQK) is disordered. A compositionally biased stretch (polar residues) spans 11–22 (RQAQQMQENMQK).

This sequence belongs to the YbaB/EbfC family. In terms of assembly, homodimer.

Its subcellular location is the cytoplasm. The protein localises to the nucleoid. Functionally, binds to DNA and alters its conformation. May be involved in regulation of gene expression, nucleoid organization and DNA protection. The polypeptide is Nucleoid-associated protein Mmwyl1_2533 (Marinomonas sp. (strain MWYL1)).